Reading from the N-terminus, the 211-residue chain is tRNA (pseudouridine(54)-N(1))-methyltransferase (211 aa).

S-adenosyl-L-methionine is bound by residues Leu-128, Gly-150, and Cys-183.

This sequence belongs to the methyltransferase superfamily. TrmY family. As to quaternary structure, homodimer.

Its subcellular location is the cytoplasm. It carries out the reaction pseudouridine(54) in tRNA + S-adenosyl-L-methionine = N(1)-methylpseudouridine(54) in tRNA + S-adenosyl-L-homocysteine + H(+). In terms of biological role, specifically catalyzes the N1-methylation of pseudouridine at position 54 (Psi54) in tRNAs. This Methanosarcina mazei (strain ATCC BAA-159 / DSM 3647 / Goe1 / Go1 / JCM 11833 / OCM 88) (Methanosarcina frisia) protein is tRNA (pseudouridine(54)-N(1))-methyltransferase.